Here is a 145-residue protein sequence, read N- to C-terminus: Large ribosomal subunit protein uL13 (145 aa).

This sequence belongs to the universal ribosomal protein uL13 family. In terms of assembly, part of the 50S ribosomal subunit.

Functionally, this protein is one of the early assembly proteins of the 50S ribosomal subunit, although it is not seen to bind rRNA by itself. It is important during the early stages of 50S assembly. The polypeptide is Large ribosomal subunit protein uL13 (Haloquadratum walsbyi (strain DSM 16790 / HBSQ001)).